Reading from the N-terminus, the 312-residue chain is Glycerol-3-phosphate dehydrogenase [NAD(P)+] (312 aa).

The NADPH site is built by Trp11, Arg30, Arg31, and Lys95. 3 residues coordinate sn-glycerol 3-phosphate: Lys95, Gly123, and Ser125. Ala127 is an NADPH binding site. 5 residues coordinate sn-glycerol 3-phosphate: Lys177, Asp230, Ser240, Arg241, and Asn242. Catalysis depends on Lys177, which acts as the Proton acceptor. Arg241 contacts NADPH. Residues Val265 and Glu267 each contribute to the NADPH site.

This sequence belongs to the NAD-dependent glycerol-3-phosphate dehydrogenase family.

It localises to the cytoplasm. The catalysed reaction is sn-glycerol 3-phosphate + NAD(+) = dihydroxyacetone phosphate + NADH + H(+). It catalyses the reaction sn-glycerol 3-phosphate + NADP(+) = dihydroxyacetone phosphate + NADPH + H(+). It functions in the pathway membrane lipid metabolism; glycerophospholipid metabolism. In terms of biological role, catalyzes the reduction of the glycolytic intermediate dihydroxyacetone phosphate (DHAP) to sn-glycerol 3-phosphate (G3P), the key precursor for phospholipid synthesis. This chain is Glycerol-3-phosphate dehydrogenase [NAD(P)+], found in Helicobacter pylori (strain HPAG1).